Reading from the N-terminus, the 821-residue chain is Cell wall integrity transcriptional regulator CAS5 (821 aa).

Disordered regions lie at residues 42–66, 219–245, 305–432, 544–576, and 607–750; these read HLQS…LNQH, FESP…LSTP, TKSN…STSQ, QEEE…TSSL, and VKQE…KHKC. A compositionally biased stretch (polar residues) spans 222–245; it reads PQSHIQSQPSYSQGYHNQNSLSTP. Residues 305-318 are compositionally biased toward low complexity; it reads TKSNSTSSYNSTLN. The segment covering 319 to 329 has biased composition (polar residues); sequence PFYTPSQQLSS. Positions 372 to 387 are enriched in basic residues; the sequence is QLRKAKSYTSLLRKKK. Positions 396–412 are enriched in low complexity; the sequence is QNQQHQQQQQQQQQQQQ. The segment covering 422–432 has biased composition (polar residues); sequence QNLSFPNSTSQ. Residues 545-561 are compositionally biased toward acidic residues; the sequence is EEEQEHQDEQMEIDSFE. Low complexity-rich tracts occupy residues 662–674 and 684–693; these read LVNK…NNDT and KNTNGNGNND. Positions 694–714 are enriched in acidic residues; it reads NDNDSEENNDNVDDADDDDDG. 2 C2H2-type zinc fingers span residues 748–770 and 776–801; these read HKCP…LKSH and FECQ…KKIH. A Phosphoserine modification is found at S769.

Phosphorylation at Ser-769 and probably additional serine residues. GLC7 dephosphorylates CAS5 in response to cell wall stress which leads to its translocation to the nucleus.

It localises to the nucleus. It is found in the cytoplasm. In terms of biological role, transcription factor that acts with ADA2 to promote cell wall integrity. Regulates the expression of target genes in concert with the transcriptional regulators SWI4 and SWI6. Crucial for proper cell cycle dynamics and responses to echinocandins, which inhibit beta-1,3-glucan synthesis. Has distinct transcriptional targets under basal and stress conditions. Also regulates a transcriptional network that influences the response to fluconazole. Plays a key role in adherence, hyphal development, and virulence. Acts as a repressor of hypha-specific genes during yeast-form growth. This Candida albicans (strain SC5314 / ATCC MYA-2876) (Yeast) protein is Cell wall integrity transcriptional regulator CAS5.